Reading from the N-terminus, the 138-residue chain is Cysteine desulfuration protein SufE (138 aa).

Cys51 functions as the Cysteine persulfide intermediate in the catalytic mechanism.

It belongs to the SufE family. In terms of assembly, homodimer. Interacts with SufS.

The protein resides in the cytoplasm. The protein operates within cofactor biosynthesis; iron-sulfur cluster biosynthesis. Participates in cysteine desulfuration mediated by SufS. Cysteine desulfuration mobilizes sulfur from L-cysteine to yield L-alanine and constitutes an essential step in sulfur metabolism for biosynthesis of a variety of sulfur-containing biomolecules. Functions as a sulfur acceptor for SufS, by mediating the direct transfer of the sulfur atom from the S-sulfanylcysteine of SufS, an intermediate product of cysteine desulfuration process. In Citrobacter koseri (strain ATCC BAA-895 / CDC 4225-83 / SGSC4696), this protein is Cysteine desulfuration protein SufE.